The chain runs to 437 residues: Indole diterpene prenyltransferase anaPT (437 aa).

Positions 1-28 are disordered; it reads MSPLSMQTDSVQGTAENKSLETNGTSND. Residues 102-103 and Glu111 contribute to the L-tryptophan site; that span reads GF. Arg124, Lys208, Tyr210, Tyr282, Gln355, Tyr357, Tyr422, and Tyr426 together coordinate dimethylallyl diphosphate.

The protein belongs to the tryptophan dimethylallyltransferase family.

It catalyses the reaction (R)-benzodiazepinedione + dimethylallyl diphosphate = (2R,3S,11R)-aszonalenin + diphosphate. The catalysed reaction is (S)-benzodiazepinedione + dimethylallyl diphosphate = (2R,3S,11S)-aszonalenin + diphosphate. The protein operates within alkaloid biosynthesis. In terms of biological role, indole diterpene prenyltransferase; part of the gene cluster that mediates the biosynthesis of the prenylated pyrroloindoline diketopiperazine acetylaszonalenin. The first step in the pathway is the formation of (R)-benzodiazepinedione by condensation of tryptophan and anthranilic acid catalyzed by the non-ribosomal peptide synthetase anaPS. The prenyltransferase anaPT then converts (R)-benzodiazepinedione to aszonalenin in the presence of dimethylallyl diphosphate (DMAPP) via C3-prenylation. The last step in the biosynthesis of acetylaszonalenin via acetylation of aszonalenin at position N1 catalyzed by anaAT. The sequence is that of Indole diterpene prenyltransferase anaPT from Neosartorya fischeri (strain ATCC 1020 / DSM 3700 / CBS 544.65 / FGSC A1164 / JCM 1740 / NRRL 181 / WB 181) (Aspergillus fischerianus).